The primary structure comprises 608 residues: UvrABC system protein C (608 aa).

One can recognise a GIY-YIG domain in the interval 18–96 (NQPGVYRMYN…IKKYKPRYNV (79 aa)). Positions 206 to 241 (KQVIDSLVQHMERASTDLRFEAAARYRDQISALNKV) constitute a UVR domain.

Belongs to the UvrC family. Interacts with UvrB in an incision complex.

It localises to the cytoplasm. Functionally, the UvrABC repair system catalyzes the recognition and processing of DNA lesions. UvrC both incises the 5' and 3' sides of the lesion. The N-terminal half is responsible for the 3' incision and the C-terminal half is responsible for the 5' incision. In Pseudoalteromonas atlantica (strain T6c / ATCC BAA-1087), this protein is UvrABC system protein C.